Here is a 141-residue protein sequence, read N- to C-terminus: General odorant-binding protein 57b (141 aa).

A signal peptide spans 1–22; that stretch reads MFIYRLVFIAPLILLLFSLAKA. 3 cysteine pairs are disulfide-bonded: C39-C77, C73-C120, and C111-C129.

Belongs to the PBP/GOBP family.

Present in the aqueous fluid surrounding olfactory sensory dendrites and are thought to aid in the capture and transport of hydrophobic odorants into and through this fluid. The polypeptide is General odorant-binding protein 57b (Drosophila melanogaster (Fruit fly)).